Reading from the N-terminus, the 278-residue chain is Urease accessory protein UreD (278 aa).

It belongs to the UreD family. As to quaternary structure, ureD, UreF and UreG form a complex that acts as a GTP-hydrolysis-dependent molecular chaperone, activating the urease apoprotein by helping to assemble the nickel containing metallocenter of UreC. The UreE protein probably delivers the nickel.

It localises to the cytoplasm. In terms of biological role, required for maturation of urease via the functional incorporation of the urease nickel metallocenter. The sequence is that of Urease accessory protein UreD from Staphylococcus aureus (strain JH1).